The primary structure comprises 656 residues: Methylenetetrahydrofolate reductase (NADPH) (656 aa).

A disordered region spans residues 1–46 (MVNEARGNDSLNPCLEGSASSSSESSKDSSRCSTPGLDPERHERLR). A phosphoserine mark is found at serine 10, serine 18, serine 20, serine 21, serine 23, serine 25, serine 26, serine 29, and serine 30. Residue threonine 34 is modified to Phosphothreonine. The active-site Proton donor/acceptor is glutamate 63. NAD(+) is bound by residues 63 to 68 (EFFPPR) and 94 to 95 (TW). Threonine 94 carries the post-translational modification Phosphothreonine. 94-95 (TW) is an FAD binding site. Position 103 is a phosphoserine (serine 103). FAD-binding positions include histidine 127, 157 to 159 (RGD), 174 to 175 (YA), tyrosine 197, 201 to 204 (HPEA), aspartate 210, and lysine 217. Position 159 (aspartate 159) interacts with substrate. Glutamine 228, tyrosine 321, and arginine 325 together coordinate substrate. Serine 394 carries the phosphoserine modification. The residue at position 451 (threonine 451) is a Phosphothreonine. S-adenosyl-L-methionine-binding positions include asparagine 456, 461-464 (AAET), 481-485 (TINSQ), threonine 560, and threonine 573.

This sequence belongs to the methylenetetrahydrofolate reductase family. As to quaternary structure, homodimer. Requires FAD as cofactor. In terms of processing, phosphorylation of an N-terminal serine-rich phosphorylation region increases sensitivity to S-adenosylmethionine and inhibition.

It catalyses the reaction (6S)-5-methyl-5,6,7,8-tetrahydrofolate + NADP(+) = (6R)-5,10-methylene-5,6,7,8-tetrahydrofolate + NADPH + H(+). It participates in one-carbon metabolism; tetrahydrofolate interconversion. With respect to regulation, allosterically regulated by S-adenosylmethionine (SAM). In terms of biological role, catalyzes the conversion of 5,10-methylenetetrahydrofolate to 5-methyltetrahydrofolate, a cosubstrate for homocysteine remethylation to methionine. Represents a key regulatory connection between the folate and methionine cycles. The sequence is that of Methylenetetrahydrofolate reductase (NADPH) (MTHFR) from Macaca fascicularis (Crab-eating macaque).